Here is a 471-residue protein sequence, read N- to C-terminus: Glutamate--tRNA ligase 1 (471 aa).

The 'HIGH' region signature appears at 15–25 (PSPTGYLHIGG). The 'KMSKS' region motif lies at 243–247 (KLSKR). K246 contributes to the ATP binding site.

This sequence belongs to the class-I aminoacyl-tRNA synthetase family. Glutamate--tRNA ligase type 1 subfamily. In terms of assembly, monomer.

It localises to the cytoplasm. The enzyme catalyses tRNA(Glu) + L-glutamate + ATP = L-glutamyl-tRNA(Glu) + AMP + diphosphate. In terms of biological role, catalyzes the attachment of glutamate to tRNA(Glu) in a two-step reaction: glutamate is first activated by ATP to form Glu-AMP and then transferred to the acceptor end of tRNA(Glu). The chain is Glutamate--tRNA ligase 1 from Cereibacter sphaeroides (strain ATCC 17023 / DSM 158 / JCM 6121 / CCUG 31486 / LMG 2827 / NBRC 12203 / NCIMB 8253 / ATH 2.4.1.) (Rhodobacter sphaeroides).